The chain runs to 945 residues: MSPHPPQPHPPMPPMPPVTAPPGAMTPMPPVPADAQKLHQSTGNDACIKRLQQLNVEDGAKMYMKPTEPGKMGRPVDIQTNVFGIEVTKETTVHRFMVHAKADLTSTKEVTFTKKGKEDFVVQDRRDKCCNIFFLAVEKNPEFFKMKDGNQIVYDGQSTLYTTVNLFSELDANGTKSKVFQINGADTGNDDLKTLPCISLEIYAPRDNSITLSSENLGKRTADQNIEVNNREYTQFLELALNQHCVRETNRFGCFEHGKVYFLNATEEGFDQRDCVDVGDGKQLYPGLKKTIQFIEGPYGRGQNNPSLVIDGMKAAFHKEQTVIQKLFDITGQDPSNGLNNMTREKAAAVIKGLDCYSTYTNRKRHLRIEGIFHESATKTRFELPDGKTCSIAEYYADKYKISLQYPNANLVVCKDRGNNNYFPAELMTVSRNQRVTIPQQTGNQSQKTTKECAVLPDVRQRMIITGKNAVNITLENELLVALGIKVYSEPLMVQARELDGKELVYQRSVMSDMGKWRAPPGWFVKPATVPDLWAAYAVGNPGCRFSIGDVNQLVGMFIDSCKKKGMVIKPPCETGLYSTEKIMTQLEKVAASKCKYVLMITDDAIVHLHKQYKALEQRTMMIVQDMKISKANAVVKDGKRLTLENIINKTNVKLGGLNYTVSDAKKSMTDEQLIIGVGVSAPPAGTKYMMDNKGHLNPQIIGFASNAVANHEFVGDFVLAPSGQDTMASIEDVLQNSIDLFEKNRKALPKRIIIYRSGASEGSHASILAYEIPLARAIIHGYSKEIKLIFIVVTKEHSYRFFRDQLRSGGKATEMNIPPGIVLDNAVTNPACKQFFLNGHTTLQGTAKTPLYTVLADDCKAPMDRLEELTFTLCHHHQIVSLSTSIPTPLYVANEYAKRGRDLWGELTTKGPIEAKESQGERLKELTKEIGYKQTDLNQKRVNA.

Residues methionine 1–alanine 20 show a composition bias toward pro residues. The disordered stretch occupies residues methionine 1–serine 41. A PAZ domain is found at threonine 322 to arginine 432. In terms of domain architecture, Piwi spans valine 636–lysine 899.

It belongs to the Argonaute family. WAGO subfamily. Interacts with rde-12. Interacts with znfx-1. In terms of tissue distribution, enriched in sperm and oocytes.

The protein localises to the cytoplasmic granule. Argonaute protein which is involved in the endogenous small interfering RNA (endo-siRNA) pathway. Interacts with secondary 22G-RNAs, which are RNA-dependent RNA polymerase-derived endo-siRNAs, typically 22 nucleotides in length with a 5'guanosine residue. In the germline, functions in a genome surveillance system to silence transposons and aberrant transcripts. This chain is Argonaute protein wago-1, found in Caenorhabditis elegans.